Here is a 503-residue protein sequence, read N- to C-terminus: 4-trimethylaminobutyraldehyde dehydrogenase (503 aa).

NAD(+) contacts are provided by residues Lys-189 and 241-245 (GSVPT). Glu-263 (proton acceptor) is an active-site residue. Cys-297 functions as the Nucleophile in the catalytic mechanism. Glu-400 is a binding site for NAD(+).

The protein belongs to the aldehyde dehydrogenase family. In terms of assembly, homotetramer.

The protein resides in the cytoplasm. Its subcellular location is the cytosol. The catalysed reaction is 4-(trimethylamino)butanal + NAD(+) + H2O = 4-(trimethylamino)butanoate + NADH + 2 H(+). It catalyses the reaction an aldehyde + NAD(+) + H2O = a carboxylate + NADH + 2 H(+). It participates in amine and polyamine biosynthesis; carnitine biosynthesis. Functionally, converts gamma-trimethylaminobutyraldehyde into gamma-butyrobetaine with high efficiency (in vitro). Can catalyze the irreversible oxidation of a broad range of aldehydes to the corresponding acids in an NAD-dependent reaction, but with low efficiency. This is 4-trimethylaminobutyraldehyde dehydrogenase (aldh9A1) from Gadus morhua subsp. callarias (Baltic cod).